The chain runs to 295 residues: Pyridoxal 5'-phosphate synthase subunit PdxS (295 aa).

Residue Asp25 coordinates D-ribose 5-phosphate. Lys82 (schiff-base intermediate with D-ribose 5-phosphate) is an active-site residue. Gly154 is a D-ribose 5-phosphate binding site. D-glyceraldehyde 3-phosphate is bound at residue Arg166. Residues Gly215 and Gly236–Ser237 contribute to the D-ribose 5-phosphate site.

The protein belongs to the PdxS/SNZ family. In the presence of PdxT, forms a dodecamer of heterodimers.

The enzyme catalyses aldehydo-D-ribose 5-phosphate + D-glyceraldehyde 3-phosphate + L-glutamine = pyridoxal 5'-phosphate + L-glutamate + phosphate + 3 H2O + H(+). Its pathway is cofactor biosynthesis; pyridoxal 5'-phosphate biosynthesis. Its function is as follows. Catalyzes the formation of pyridoxal 5'-phosphate from ribose 5-phosphate (RBP), glyceraldehyde 3-phosphate (G3P) and ammonia. The ammonia is provided by the PdxT subunit. Can also use ribulose 5-phosphate and dihydroxyacetone phosphate as substrates, resulting from enzyme-catalyzed isomerization of RBP and G3P, respectively. This is Pyridoxal 5'-phosphate synthase subunit PdxS from Heliobacterium modesticaldum (strain ATCC 51547 / Ice1).